We begin with the raw amino-acid sequence, 533 residues long: AAA-ATPase At5g17740 (533 aa).

The chain crosses the membrane as a helical span at residues 11 to 27; the sequence is ASMFSTYASMMGYVMII. 252–259 is a binding site for ATP; that stretch reads GPPGTGKS.

The protein belongs to the AAA ATPase family. BCS1 subfamily. Mg(2+) serves as cofactor.

The protein localises to the membrane. It catalyses the reaction ATP + H2O = ADP + phosphate + H(+). In Arabidopsis thaliana (Mouse-ear cress), this protein is AAA-ATPase At5g17740.